We begin with the raw amino-acid sequence, 446 residues long: MKKAYVKSYGCQMNAYDAGRMADVLAAEGYSATDTVEEADVVVLNTCHIREKAAEKVYSELGRLRVLKGDRAESGQETRIVVAGCVAQAEGREILSRAPAVDVVVGPQSYHRLPDLLRQSRETRVVDTEFPAEDKFDHLPARRNRGVTGFLTVQEGCDKFCAFCVVPYTRGAEVSRSVAAVVEEARRLVEGGVREITLIGQNVNAYHGDGPDGAPATLGQLMDALSAVPGLLRLRYTTSHPNDFADDLIAAHATNPLVMPYLHLPVQSGSDRILHAMNRRHTGDAYRRLIERIRNARPDIALSSDFIVGFPGETDADFAETLRLVSDIGFSAAFSFKYSPRAGTPAAEREDAVPEAVKTERLAALQDLLDRQRHAYNAASVGTLTEILVEKTGRHPGQVAGKTPHLQAVQFDAPASTIGTVVPVRITRAGSNSLFGEALEGAAAAA.

In terms of domain architecture, MTTase N-terminal spans 2 to 122 (KKAYVKSYGC…LPDLLRQSRE (121 aa)). The [4Fe-4S] cluster site is built by cysteine 11, cysteine 47, cysteine 85, cysteine 157, cysteine 161, and cysteine 164. Residues 143–375 (RNRGVTGFLT…QDLLDRQRHA (233 aa)) form the Radical SAM core domain. Residues 378–440 (AASVGTLTEI…SNSLFGEALE (63 aa)) form the TRAM domain.

This sequence belongs to the methylthiotransferase family. MiaB subfamily. Monomer. The cofactor is [4Fe-4S] cluster.

Its subcellular location is the cytoplasm. It catalyses the reaction N(6)-dimethylallyladenosine(37) in tRNA + (sulfur carrier)-SH + AH2 + 2 S-adenosyl-L-methionine = 2-methylsulfanyl-N(6)-dimethylallyladenosine(37) in tRNA + (sulfur carrier)-H + 5'-deoxyadenosine + L-methionine + A + S-adenosyl-L-homocysteine + 2 H(+). In terms of biological role, catalyzes the methylthiolation of N6-(dimethylallyl)adenosine (i(6)A), leading to the formation of 2-methylthio-N6-(dimethylallyl)adenosine (ms(2)i(6)A) at position 37 in tRNAs that read codons beginning with uridine. The chain is tRNA-2-methylthio-N(6)-dimethylallyladenosine synthase from Methylorubrum extorquens (strain CM4 / NCIMB 13688) (Methylobacterium extorquens).